A 765-amino-acid polypeptide reads, in one-letter code: MVRTKNQSSSSSASSSTKSPVKISGGGSSGANRSRSCSEALIDDGKTSSKLSSNRQRATITTTTTSTTPGSSPDDDTTDADLTPTSGYGPRGGTSVHKQNLYVVSFPIIFLFNVLRSLIYQLFCIFRYLYCASTKVIYRSPHRRDCNIEIVVQNSKEQQSIICPLERNTSDGIEKAQQLLPQRQRALLPLEMATNRGGSGGYSPGPGDPLLAKQKHHHRRAFEYISKALKIDEENEGHKELAIELYRKGIKELEDGIAVDCWSGRGDVWDRAQRLHEKMQTNLSMARDRLHFLALREEDLQMQRLSLMDPPKNKQQVTSKFKQPMLVGQTNSKAAAVEPSKITMRSSGYGPKPVSGTGSSAGTSKALQAASGRKLTIGNKRPGNLAVANKSQTLPRNLGSKTTSTSVGAALQRQPGKTAATPPAVRRQFSSGRNTPPQRSRTPINNNAASGSGSGSGASTPMISVKGVEQKLVQLIMDEIVEGGAKVEWTDIAGQDVAKQALQEMVILPSVRPELFTGLRAPAKGLLLFGPPGNGKTLLARAVATECSATFLNISAASLTSKYVGDGEKLVRALFAVARHLQPSIIFIDEVDSLLSERSSNEHEASRRLKTEFLVEFDGLPGNPEGDRIVVLAATNRPQELDEAALRRFTKRVYVSLPEVQTRELLLSRLLQKQGSPLDTEALARLAKITDGYSGSDLTALAKDAALEPIRELNVEQVKCLDISAMRPITEKDFHNSLKRIRRSVAPQSLNSYEKWSQDYGDITI.

The segment at 1-94 (MVRTKNQSSS…TSGYGPRGGT (94 aa)) is disordered. The Cytoplasmic segment spans residues 1-107 (MVRTKNQSSS…KQNLYVVSFP (107 aa)). The segment at 1 to 195 (MVRTKNQSSS…ALLPLEMATN (195 aa)) is required for localization to punctate cytoplasmic foci. Residues 8–19 (SSSSSASSSTKS) show a composition bias toward low complexity. Positions 48 to 58 (SSKLSSNRQRA) are enriched in polar residues. Positions 59–72 (TITTTTTSTTPGSS) are enriched in low complexity. Positions 108 to 128 (IIFLFNVLRSLIYQLFCIFRY) form an intramembrane region, helical. At 129-765 (LYCASTKVIY…WSQDYGDITI (637 aa)) the chain is on the cytoplasmic side. The segment at 193 to 765 (ATNRGGSGGY…WSQDYGDITI (573 aa)) is sufficient for interaction with microtubules and microtubule severing. Residues 218 to 293 (HRRAFEYISK…SMARDRLHFL (76 aa)) form the MIT domain. Residues 329 to 462 (QTNSKAAAVE…GSGSGASTPM (134 aa)) are disordered. Positions 355–364 (SGTGSSAGTS) are enriched in low complexity. Composition is skewed to polar residues over residues 389-407 (NKSQ…STSV) and 428-444 (QFSS…RTPI). Positions 446–462 (NNAASGSGSGSGASTPM) are required for interaction with microtubules. Position 530-537 (530-537 (GPPGNGKT)) interacts with ATP.

It belongs to the AAA ATPase family. Spastin subfamily. As to quaternary structure, homohexamer. The homohexamer is stabilized by ATP-binding. The homohexamer may adopt a ring conformation through which microtubules pass prior to being severed. Interacts with microtubules. Interacts with atl; may be involved in microtubule dynamics.

The protein resides in the membrane. It localises to the cytoplasm. Its subcellular location is the cytoskeleton. The protein localises to the microtubule organizing center. It is found in the centrosome. The protein resides in the chromosome. It localises to the lipid droplet. The enzyme catalyses n ATP + n H2O + a microtubule = n ADP + n phosphate + (n+1) alpha/beta tubulin heterodimers.. In terms of biological role, ATP-dependent microtubule severing protein. Stimulates microtubule minus-end depolymerization and poleward microtubule flux in the mitotic spindle. Regulates microtubule stability in the neuromuscular junction synapse. Involved in lipid metabolism by regulating the size and distribution of lipid droplets. Involved in axon regeneration by regulating microtubule severing. This Drosophila mojavensis (Fruit fly) protein is Spastin.